Reading from the N-terminus, the 280-residue chain is Urease accessory protein UreD (280 aa).

The protein belongs to the UreD family. UreD, UreF and UreG form a complex that acts as a GTP-hydrolysis-dependent molecular chaperone, activating the urease apoprotein by helping to assemble the nickel containing metallocenter of UreC. The UreE protein probably delivers the nickel.

It is found in the cytoplasm. Functionally, required for maturation of urease via the functional incorporation of the urease nickel metallocenter. This is Urease accessory protein UreD from Mesorhizobium japonicum (strain LMG 29417 / CECT 9101 / MAFF 303099) (Mesorhizobium loti (strain MAFF 303099)).